A 375-amino-acid polypeptide reads, in one-letter code: Queuine tRNA-ribosyltransferase (375 aa).

The Proton acceptor role is filled by Asp89. Residues 89-93 (DSGGF), Asp143, Gln187, and Gly214 contribute to the substrate site. The segment at 245–251 (GVGKPED) is RNA binding. The active-site Nucleophile is the Asp264. Residues 269–273 (TRNAR) form an RNA binding; important for wobble base 34 recognition region. Zn(2+)-binding residues include Cys302, Cys304, Cys307, and His333.

The protein belongs to the queuine tRNA-ribosyltransferase family. As to quaternary structure, homodimer. Within each dimer, one monomer is responsible for RNA recognition and catalysis, while the other monomer binds to the replacement base PreQ1. Zn(2+) is required as a cofactor.

The catalysed reaction is 7-aminomethyl-7-carbaguanine + guanosine(34) in tRNA = 7-aminomethyl-7-carbaguanosine(34) in tRNA + guanine. The protein operates within tRNA modification; tRNA-queuosine biosynthesis. Functionally, catalyzes the base-exchange of a guanine (G) residue with the queuine precursor 7-aminomethyl-7-deazaguanine (PreQ1) at position 34 (anticodon wobble position) in tRNAs with GU(N) anticodons (tRNA-Asp, -Asn, -His and -Tyr). Catalysis occurs through a double-displacement mechanism. The nucleophile active site attacks the C1' of nucleotide 34 to detach the guanine base from the RNA, forming a covalent enzyme-RNA intermediate. The proton acceptor active site deprotonates the incoming PreQ1, allowing a nucleophilic attack on the C1' of the ribose to form the product. After dissociation, two additional enzymatic reactions on the tRNA convert PreQ1 to queuine (Q), resulting in the hypermodified nucleoside queuosine (7-(((4,5-cis-dihydroxy-2-cyclopenten-1-yl)amino)methyl)-7-deazaguanosine). The protein is Queuine tRNA-ribosyltransferase of Aliivibrio salmonicida (strain LFI1238) (Vibrio salmonicida (strain LFI1238)).